The chain runs to 212 residues: Thymidylate kinase (212 aa).

11–18 (GIEGSGKT) contacts ATP.

This sequence belongs to the thymidylate kinase family.

It catalyses the reaction dTMP + ATP = dTDP + ADP. Functionally, phosphorylation of dTMP to form dTDP in both de novo and salvage pathways of dTTP synthesis. The chain is Thymidylate kinase from Buchnera aphidicola subsp. Baizongia pistaciae (strain Bp).